The sequence spans 120 residues: Cell cycle protein GpsB (120 aa).

Residues 34-74 (LDDVIKDYDTYNKELERLNDENERLRAKVDELNRQVEVGSS) adopt a coiled-coil conformation. Residues 69–90 (VEVGSSMSNQTASRQPVSSATN) are disordered. Positions 71-90 (VGSSMSNQTASRQPVSSATN) are enriched in polar residues.

Belongs to the GpsB family. Forms polymers through the coiled coil domains. Interacts with PBP1, MreC and EzrA.

The protein localises to the cytoplasm. In terms of biological role, divisome component that associates with the complex late in its assembly, after the Z-ring is formed, and is dependent on DivIC and PBP2B for its recruitment to the divisome. Together with EzrA, is a key component of the system that regulates PBP1 localization during cell cycle progression. Its main role could be the removal of PBP1 from the cell pole after pole maturation is completed. Also contributes to the recruitment of PBP1 to the division complex. Not essential for septum formation. This is Cell cycle protein GpsB from Limosilactobacillus reuteri (strain DSM 20016) (Lactobacillus reuteri).